Here is a 244-residue protein sequence, read N- to C-terminus: MNGPADGEVDYKKKYRNLKRKLKFLIYEHECFQEELRKAQRKLLKVSRDKSFLLDRLLQYENVDEDSSDSDATASSDNSETEGTPKLSDTPAPKRKRSPPLGGAPSPSSLSLPPSTGFPLQASGVPSPYLSSLASSRYPPFPSDYLALQLPEPSPLRPKREKRPRLPRKLKMAVGPPDCPVGGPLTFPGRGSGAGVGTTLTPLPPPKMPPPTILSTVPRQMFSDAGSGDDALDGDDDLVIDIPE.

A coiled-coil region spans residues 10–54; it reads DYKKKYRNLKRKLKFLIYEHECFQEELRKAQRKLLKVSRDKSFLL. A disordered region spans residues 63-236; sequence VDEDSSDSDA…SGDDALDGDD (174 aa). Low complexity predominate over residues 99–115; sequence PPLGGAPSPSSLSLPPS. The segment covering 157 to 171 has biased composition (basic residues); it reads RPKREKRPRLPRKLK. Glycyl lysine isopeptide (Lys-Gly) (interchain with G-Cter in SUMO2) cross-links involve residues Lys-159 and Lys-171. Residues 202 to 212 show a composition bias toward pro residues; sequence PLPPPKMPPPT.

As to quaternary structure, component of the chromatin remodeling INO80 complex; specifically part of a complex module associated with the N-terminus of INO80.

It is found in the nucleus. Its function is as follows. Putative regulatory component of the chromatin remodeling INO80 complex which is involved in transcriptional regulation, DNA replication and probably DNA repair. This chain is INO80 complex subunit E (INO80E), found in Homo sapiens (Human).